The chain runs to 446 residues: Probable inactive lipase MT1628 (446 aa).

It belongs to the AB hydrolase superfamily. Lipase family.

In Mycobacterium tuberculosis (strain CDC 1551 / Oshkosh), this protein is Probable inactive lipase MT1628.